A 347-amino-acid polypeptide reads, in one-letter code: Probable cytosolic iron-sulfur protein assembly protein 1 (347 aa).

WD repeat units follow at residues 11 to 48, 62 to 101, 122 to 161, 168 to 207, 212 to 255, 266 to 304, and 311 to 347; these read LHNEKIWDIDCYKGLLATASTDRRIKIVNIGDIGDGLV, SHKKTVRSVAWRPHSTILAAGSFDSTVSIWAKDENDGDAD, GHENEVKSVAWSKDGYFLATCSRDKSVWIWESDEMGEEYE, EHSQDVKHVVWHPFKDILASSSYDDTIRIWKEYDDDWEAA, GHEG…SIEE, VHGKPVYSVSWSEDGLIASAGSDGMLVIYKENKDNVWEV, and SHSIYEINVVKWIKLNNGKSYLATAGDDGYVNIWAYN.

The protein belongs to the WD repeat CIA1 family. As to quaternary structure, interacts with NAR1.

The protein resides in the cytoplasm. It is found in the nucleus. Its function is as follows. Essential component of the cytosolic iron-sulfur (Fe/S) protein assembly machinery. Required for the maturation of extramitochondrial Fe/S proteins. The sequence is that of Probable cytosolic iron-sulfur protein assembly protein 1 from Vanderwaltozyma polyspora (strain ATCC 22028 / DSM 70294 / BCRC 21397 / CBS 2163 / NBRC 10782 / NRRL Y-8283 / UCD 57-17) (Kluyveromyces polysporus).